A 784-amino-acid polypeptide reads, in one-letter code: Protein-tyrosine-phosphatase MKP1 (784 aa).

2 disordered regions span residues 1-73 and 94-118; these read MVGR…NSKA and PKAG…TGER. A compositionally biased stretch (low complexity) spans 22–34; it reads WRSASWSASRTAS. Phosphothreonine is present on residues threonine 64 and threonine 109. Residues 149-291 form the Tyrosine-protein phosphatase domain; the sequence is ECSKVADHIY…LLQCQKRVHA (143 aa). The Phosphocysteine intermediate role is filled by cysteine 235. Substrate is bound at residue 235-241; the sequence is CCQGVSR. A disordered region spans residues 488–586; sequence HSSGSPSSTT…ASPSLAERRG (99 aa). Low complexity-rich tracts occupy residues 489-510 and 521-553; these read SSGS…FLSP and SLKS…LSLL. Residues 554 to 577 show a composition bias toward polar residues; the sequence is PSQTSPKESRGVNTFLQPSPNRKA. 2 positions are modified to phosphoserine: serine 558 and serine 572.

As to quaternary structure, interacts with MPK6. May interact with MPK3 and MPK4. Phosphorylated on threonine and serine residues by MPK6.

It is found in the cytoplasm. Its subcellular location is the cytosol. It catalyses the reaction O-phospho-L-tyrosyl-[protein] + H2O = L-tyrosyl-[protein] + phosphate. Functionally, protein-tyrosine-phosphatase that acts as a negative regulator of MPK6 and MPK3 signaling by dephosphorylating and repressing MPK6 and MPK3. Modulates defense response by repressing salicylic acid (SA) production, camalexin biosynthesis and SNC1-mediated responses. Acts as a negative regulator of MPK6-mediated pathogen-associated molecular pattern (PAMP) responses, including MPK6 and MPK3 activation, accumulation of extracellular reactive oxygen species and inhibition of seedling growth. Involved in UV-B stress tolerance. May be involved in salt and genotoxic stress responses. In Arabidopsis thaliana (Mouse-ear cress), this protein is Protein-tyrosine-phosphatase MKP1 (MKP1).